We begin with the raw amino-acid sequence, 608 residues long: Cilia- and flagella-associated protein 100 (608 aa).

The segment covering 1 to 17 (MSETLSNIVSKNMTNDK) has biased composition (polar residues). The disordered stretch occupies residues 1 to 57 (MSETLSNIVSKNMTNDKNSLESMNISSSSSAEENPKKQAKKXKERGPDPSANPFHLS). Positions 20–32 (LESMNISSSSSAE) are enriched in low complexity. Coiled-coil stretches lie at residues 164 to 196 (TLDCKRREIQRLETLATKEEARLQQAEKSLAKD) and 230 to 257 (LEIRDLTTQIVNIKSEISRFEDTLQHYK). Disordered stretches follow at residues 291-320 (ASKDGSVNSTPGDKGPGIKGKASSVWAKEG) and 339-377 (LSSPQQGSQPSESSGGNSRGSNSPIPLTQEDTDSDGEEP). Positions 339–361 (LSSPQQGSQPSESSGGNSRGSNS) are enriched in low complexity. 2 coiled-coil regions span residues 385-435 (QQLL…QLKQ) and 500-575 (TVQM…RGRT).

This sequence belongs to the CFAP100 family.

It localises to the cytoplasm. The protein localises to the cytoskeleton. The protein resides in the cilium axoneme. In terms of biological role, may play a role in ciliary/flagellar motility by regulating the assembly and the activity of axonemal inner dynein arm. The protein is Cilia- and flagella-associated protein 100 of Macaca fascicularis (Crab-eating macaque).